Reading from the N-terminus, the 132-residue chain is 3-aminoacrylate deaminase RutC (132 aa).

It belongs to the RutC family.

The enzyme catalyses (Z)-3-aminoacrylate + H2O + H(+) = 3-oxopropanoate + NH4(+). Its function is as follows. Involved in pyrimidine catabolism. Catalyzes the deamination of 3-aminoacrylate to malonic semialdehyde, a reaction that can also occur spontaneously. RutC may facilitate the reaction and modulate the metabolic fitness, rather than catalyzing essential functions. The polypeptide is 3-aminoacrylate deaminase RutC (Cronobacter turicensis (strain DSM 18703 / CCUG 55852 / LMG 23827 / z3032)).